The primary structure comprises 254 residues: Flavin-dependent thymidylate synthase (254 aa).

Positions 7–237 (LRVQLIARTE…PAVFADFEIY (231 aa)) constitute a ThyX domain. FAD is bound by residues Ser71, 95–97 (RHR), and Gln103. DUMP is bound by residues 92–95 (ELIR), 103–107 (QLSQR), and Arg176. Positions 95 to 105 (RHRHFSYSQLS) match the ThyX motif motif. Residues 192–194 (NYR) and His198 each bind FAD. DUMP is bound at residue Arg203. The active-site Involved in ionization of N3 of dUMP, leading to its activation is Arg203.

It belongs to the thymidylate synthase ThyX family. Homotetramer. It depends on FAD as a cofactor.

It catalyses the reaction dUMP + (6R)-5,10-methylene-5,6,7,8-tetrahydrofolate + NADPH + H(+) = dTMP + (6S)-5,6,7,8-tetrahydrofolate + NADP(+). It participates in pyrimidine metabolism; dTTP biosynthesis. Catalyzes the reductive methylation of 2'-deoxyuridine-5'-monophosphate (dUMP) to 2'-deoxythymidine-5'-monophosphate (dTMP) while utilizing 5,10-methylenetetrahydrofolate (mTHF) as the methyl donor, and NADPH and FADH(2) as the reductant. The protein is Flavin-dependent thymidylate synthase of Mycobacterium sp. (strain KMS).